The sequence spans 347 residues: Phenylalanine--tRNA ligase alpha subunit (347 aa).

Position 261 (Glu-261) interacts with Mg(2+).

Belongs to the class-II aminoacyl-tRNA synthetase family. Phe-tRNA synthetase alpha subunit type 1 subfamily. In terms of assembly, tetramer of two alpha and two beta subunits. It depends on Mg(2+) as a cofactor.

Its subcellular location is the cytoplasm. It carries out the reaction tRNA(Phe) + L-phenylalanine + ATP = L-phenylalanyl-tRNA(Phe) + AMP + diphosphate + H(+). The protein is Phenylalanine--tRNA ligase alpha subunit of Streptococcus mutans serotype c (strain ATCC 700610 / UA159).